The sequence spans 371 residues: tRNA-specific 2-thiouridylase MnmA (371 aa).

Residues 22-29 (GLSGGVDS) and Met-48 each bind ATP. The interval 108–110 (NPD) is interaction with target base in tRNA. Catalysis depends on Cys-113, which acts as the Nucleophile. Cys-113 and Cys-209 are oxidised to a cystine. Gly-137 serves as a coordination point for ATP. Positions 159–161 (KDQ) are interaction with tRNA. Cys-209 serves as the catalytic Cysteine persulfide intermediate.

The protein belongs to the MnmA/TRMU family.

Its subcellular location is the cytoplasm. The enzyme catalyses S-sulfanyl-L-cysteinyl-[protein] + uridine(34) in tRNA + AH2 + ATP = 2-thiouridine(34) in tRNA + L-cysteinyl-[protein] + A + AMP + diphosphate + H(+). Functionally, catalyzes the 2-thiolation of uridine at the wobble position (U34) of tRNA, leading to the formation of s(2)U34. This is tRNA-specific 2-thiouridylase MnmA from Coxiella burnetii (strain CbuK_Q154) (Coxiella burnetii (strain Q154)).